The following is a 486-amino-acid chain: ATP-dependent rRNA helicase rrp3 (486 aa).

The disordered stretch occupies residues 1–60 (MSSVKRRKTDKNPSLEGLKSKKTKESKKESHTPSPEPIEDTEDNRVIEETEEAEEDDAPK). A Q motif motif is present at residues 60-88 (KSFKDLGIVDSLCEACDTLGYKAPTPIQR). The Helicase ATP-binding domain occupies 91–262 (IPLALQGRDL…RASLKDPLRV (172 aa)). 104–111 (AETGSGKT) is an ATP binding site. Positions 210–213 (DEAD) match the DEAD box motif. The 149-residue stretch at 286–434 (HKDTYLIYLL…EYPTVKDEVM (149 aa)) folds into the Helicase C-terminal domain. 2 stretches are compositionally biased toward basic and acidic residues: residues 447 to 460 (ARNE…DRGK) and 476 to 486 (RGRDEMDREEG). Residues 447–486 (ARNEMKNLHEDRGKKGAVLKGRRPANGAKRGRDEMDREEG) form a disordered region.

It belongs to the DEAD box helicase family. DDX47/RRP3 subfamily. As to quaternary structure, interacts with the SSU processome.

The protein localises to the nucleus. It catalyses the reaction ATP + H2O = ADP + phosphate + H(+). ATP-dependent rRNA helicase required for pre-ribosomal RNA processing. Involved in the maturation of the 35S-pre-rRNA and to its cleavage to mature 18S rRNA. This Botryotinia fuckeliana (strain B05.10) (Noble rot fungus) protein is ATP-dependent rRNA helicase rrp3.